We begin with the raw amino-acid sequence, 221 residues long: SIN3-HDAC complex-associated factor (221 aa).

A compositionally biased stretch (basic and acidic residues) spans 112-121 (QKEFKRHNSD). Disordered regions lie at residues 112–152 (QKEF…MASG) and 201–221 (AAAE…TQEW). Positions 124-135 (STTSSASPAQSP) are enriched in low complexity. Polar residues predominate over residues 136-152 (CYSNQSDDGSDTEMASG).

The protein belongs to the SINHCAF family. Interacts with the Sin3/HDAC corepressor complex at least composed of BRMS1, BRMS1L, ING2, SAP30, SAP30L and HDAC1. Found in a complex composed of at least SINHCAF, SIN3A, HDAC1, SAP30, RBBP4, OGT and TET1. Interacts with SIN3A and OGT.

It is found in the nucleus. In terms of biological role, subunit of the Sin3 deacetylase complex (Sin3/HDAC), this subunit is important for the repression of genes encoding components of the TGF-beta signaling pathway. Core component of a SIN3A complex (composed of at least SINHCAF, SIN3A, HDAC1, SAP30, RBBP4, OGT and TET1) present in embryonic stem (ES) cells. Promotes the stability of SIN3A and its presence on chromatin and is essential for maintaining the potential of ES cells to proliferate rapidly, while ensuring a short G1-phase of the cell cycle, thereby preventing premature lineage priming. The chain is SIN3-HDAC complex-associated factor from Homo sapiens (Human).